Consider the following 270-residue polypeptide: Nuclease PA3 (270 aa).

A divalent metal cation is bound by residues Trp1, His6, His15, Asp45, and His60. 1–6 (WGALGH) provides a ligand contact to substrate. Residues 45–51 (DEYRLTS), 60–63 (HFID), and 73–78 (NVDYER) contribute to the substrate site. Intrachain disulfides connect Cys72-Cys217 and Cys80-Cys85. Asn92 is a binding site for substrate. N-linked (GlcNAc...) asparagine glycosylation occurs at Asn92. 3 residues coordinate a divalent metal cation: His116, Asp120, and His126. Positions 116 to 164 (HFIGDMTQPLHDEAYAVGGNKINVTFDGYHDNLHSDWDTYMPQKLIGGH) are substrate binding. Asn138 is a glycosylation site (N-linked (GlcNAc...) asparagine). A divalent metal cation-binding residues include His149 and Asp153. 2 N-linked (GlcNAc...) asparagine glycosylation sites follow: Asn184 and Asn197.

It belongs to the nuclease type I family. It depends on Zn(2+) as a cofactor.

The protein localises to the secreted. It carries out the reaction a ribonucleoside 3'-phosphate + H2O = a ribonucleoside + phosphate. Functionally, hydrolyzes only single-stranded DNA and RNA without apparent specificity for bases. The chain is Nuclease PA3 from Penicillium sp.